A 238-amino-acid chain; its full sequence is Auxin-responsive protein IAA2 (238 aa).

Positions 24 to 28 (LCLGL) match the EAR-like (transcriptional repression) motif. Composition is skewed to low complexity over residues 33–44 (SSSSSSKPSEGS), 59–69 (ASKPSGAAAAA), and 85–94 (ASSSSSSSKQ). 2 disordered regions span residues 33-69 (SSSSSSKPSEGSTAAPAFALRSNGTNASKPSGAAAAA) and 82-114 (RNLASSSSSSSKQAPPPPSSSPQNGDKASKDGG). The 99-residue stretch at 118–216 (GMFVKINMDG…TAKRLRVLKS (99 aa)) folds into the PB1 domain. A disordered region spans residues 217–238 (SDLPPPSLMRAAGSRKRAAADS). Basic residues predominate over residues 229-238 (GSRKRAAADS).

Belongs to the Aux/IAA family. As to quaternary structure, homodimers and heterodimers. Highly expressed in flowers.

It is found in the nucleus. Functionally, aux/IAA proteins are short-lived transcriptional factors that function as repressors of early auxin response genes at low auxin concentrations. This Oryza sativa subsp. japonica (Rice) protein is Auxin-responsive protein IAA2 (IAA2).